Reading from the N-terminus, the 320-residue chain is Small ribosomal subunit protein mS35 (320 aa).

The tract at residues 24 to 63 is disordered; it reads SVASPAAPRAGPRTASRSERPMRRKALPPRTEKMDTDQDW.

The protein belongs to the mitochondrion-specific ribosomal protein mS35 family. Component of the mitochondrial ribosome small subunit (28S) which comprises a 12S rRNA and about 30 distinct proteins.

It is found in the mitochondrion. This is Small ribosomal subunit protein mS35 from Mus musculus (Mouse).